We begin with the raw amino-acid sequence, 365 residues long: Zinc finger protein lsy-2 (365 aa).

The segment at 1–36 (MLTRRNAKQSQRNSADQSLSEFNSSSMTHGSNQSVY) is disordered. Over residues 8–36 (KQSQRNSADQSLSEFNSSSMTHGSNQSVY) the composition is skewed to polar residues. 5 consecutive C2H2-type zinc fingers follow at residues 78-100 (HQCNVCNKIFVSYKGLQQHAVIH), 106-128 (FRCDICSKSFRFKSNLFEHRSVH), 134-156 (HACPYCGKTCRLKGNLKKHLRTH), 264-287 (HDCPVCKSQFMTRMDCVSHHTLEH), and 296-318 (FFCEKCYRPFADEASYNQHMSYH).

The protein localises to the nucleus speckle. In terms of biological role, involved in transcriptional regulation. Required to specify left-right asymmetry of the ASE gustatory neurons, probably acting upstream of microRNA lsy-6. Involved in maintaining the distinction between somatic and germ cells, perhaps acting by repressing germ cell-specific genes in somatic cells. In Caenorhabditis elegans, this protein is Zinc finger protein lsy-2.